We begin with the raw amino-acid sequence, 287 residues long: Protein TMEPAI (287 aa).

At methionine 1 to glutamate 40 the chain is on the lumenal side. Residues phenylalanine 41–serine 63 traverse the membrane as a helical segment. Topologically, residues histidine 64–leucine 287 are cytoplasmic. The PPxY motif 1 motif lies at proline 158–tyrosine 161. Positions proline 186–arginine 189 match the SMAD interaction motif (SIM) motif. A PPxY motif 2 motif is present at residues proline 229–tyrosine 232. Positions tyrosine 239–glycine 258 are disordered. Polar residues predominate over residues serine 242 to proline 252.

This sequence belongs to the PMEPA1 family. As to quaternary structure, interacts with NEDD4 (via PPxY motifs). Interacts with AR. Interacts with LDLRAD4. Interacts (via the SMAD interaction motif) with SMAD2 and SMAD3. Highest expression in prostate. Also expressed in ovary.

It localises to the early endosome membrane. It is found in the golgi apparatus membrane. Its function is as follows. Functions as a negative regulator of TGF-beta signaling and thereby probably plays a role in cell proliferation, differentiation, apoptosis, motility, extracellular matrix production and immunosuppression. In the canonical TGF-beta pathway, ZFYVE9/SARA recruits the intracellular signal transducer and transcriptional modulators SMAD2 and SMAD3 to the TGF-beta receptor. Phosphorylated by the receptor, SMAD2 and SMAD3 then form a heteromeric complex with SMAD4 that translocates to the nucleus to regulate transcription. Through interaction with SMAD2 and SMAD3, LDLRAD4 may compete with ZFYVE9 and SMAD4 and prevent propagation of the intracellular signal. Also involved in down-regulation of the androgen receptor (AR), enhancing ubiquitination and proteasome-mediated degradation of AR, probably by recruiting NEDD4. The sequence is that of Protein TMEPAI (PMEPA1) from Homo sapiens (Human).